The sequence spans 455 residues: L-serine dehydratase (455 aa).

This sequence belongs to the iron-sulfur dependent L-serine dehydratase family. It depends on [4Fe-4S] cluster as a cofactor.

The enzyme catalyses L-serine = pyruvate + NH4(+). The protein operates within carbohydrate biosynthesis; gluconeogenesis. This chain is L-serine dehydratase (sdaA), found in Haemophilus influenzae (strain ATCC 51907 / DSM 11121 / KW20 / Rd).